The chain runs to 489 residues: MANYFNTLPLRLQLEQLGVCEFMEQSEFADGISALAGKKVVIVGCGAQGLNQGLNMRDSGLDISYALRADAIAEKRASYKNATENGFKVGTYEELIPTADLVCNLTPDKQHTSVVNAIMPLMKQGSTLAYSHGFNIVEEGMQIRKDITVIMCAPKCPGSEVREEYKRGFGVPTLIAVHPENDPNGFGLDQAKAYAVATGGHKAGVLRSSFVAEVKSDLMGEQTILCGLLQTGSILCFDKMVEKGIDAAYASKLIQYGWETITEALKHGGITNMMDRLNNPSKIEAYELAEELKDIMRPLFQKHQDDIISGEFSRTMMIDWANDDVNLLKWRAATGETNFEKTAPQEAPISEQEYFDNGVLMIAMVKAGVELAFETMTEAGIIEESAYYESLHELPLIANTIARKKLFEMNRVISDTAEYGCYLFDHACKPLLTEFMKKVETNIIGKPFSTSNGVDNTVLIAVNKEIRQHPIEEVGAWLRESMTAMKKIG.

The KARI N-terminal Rossmann domain maps to 17–208 (LGVCEFMEQS…GGHKAGVLRS (192 aa)). NADP(+)-binding positions include 45-48 (CGAQ), arginine 68, arginine 76, serine 78, and 108-110 (DKQ). Histidine 132 is an active-site residue. NADP(+) is bound at residue glycine 158. 2 consecutive KARI C-terminal knotted domains span residues 209–344 (SFVA…KTAP) and 345–485 (QEAP…MTAM). Residues aspartate 217, glutamate 221, glutamate 389, and glutamate 393 each coordinate Mg(2+). Position 414 (serine 414) interacts with substrate.

This sequence belongs to the ketol-acid reductoisomerase family. Mg(2+) is required as a cofactor.

It catalyses the reaction (2R)-2,3-dihydroxy-3-methylbutanoate + NADP(+) = (2S)-2-acetolactate + NADPH + H(+). The enzyme catalyses (2R,3R)-2,3-dihydroxy-3-methylpentanoate + NADP(+) = (S)-2-ethyl-2-hydroxy-3-oxobutanoate + NADPH + H(+). The protein operates within amino-acid biosynthesis; L-isoleucine biosynthesis; L-isoleucine from 2-oxobutanoate: step 2/4. It participates in amino-acid biosynthesis; L-valine biosynthesis; L-valine from pyruvate: step 2/4. Its function is as follows. Involved in the biosynthesis of branched-chain amino acids (BCAA). Catalyzes an alkyl-migration followed by a ketol-acid reduction of (S)-2-acetolactate (S2AL) to yield (R)-2,3-dihydroxy-isovalerate. In the isomerase reaction, S2AL is rearranged via a Mg-dependent methyl migration to produce 3-hydroxy-3-methyl-2-ketobutyrate (HMKB). In the reductase reaction, this 2-ketoacid undergoes a metal-dependent reduction by NADPH to yield (R)-2,3-dihydroxy-isovalerate. The chain is Ketol-acid reductoisomerase (NADP(+)) from Flavobacterium johnsoniae (strain ATCC 17061 / DSM 2064 / JCM 8514 / BCRC 14874 / CCUG 350202 / NBRC 14942 / NCIMB 11054 / UW101) (Cytophaga johnsonae).